We begin with the raw amino-acid sequence, 123 residues long: Large ribosomal subunit protein bL12 (123 aa).

Belongs to the bacterial ribosomal protein bL12 family. As to quaternary structure, homodimer. Part of the ribosomal stalk of the 50S ribosomal subunit. Forms a multimeric L10(L12)X complex, where L10 forms an elongated spine to which 2 to 4 L12 dimers bind in a sequential fashion. Binds GTP-bound translation factors.

In terms of biological role, forms part of the ribosomal stalk which helps the ribosome interact with GTP-bound translation factors. Is thus essential for accurate translation. The sequence is that of Large ribosomal subunit protein bL12 from Desulfotalea psychrophila (strain LSv54 / DSM 12343).